A 71-amino-acid polypeptide reads, in one-letter code: Bacteriocin carnobacteriocin-A (71 aa).

A propeptide spanning residues 1-18 (MNNVKELSIKEMQQVTGG) is cleaved from the precursor. Cys40 and Cys69 are oxidised to a cystine.

The protein resides in the secreted. Has antibacterial activity. The protein is Bacteriocin carnobacteriocin-A (cbnBA) of Carnobacterium maltaromaticum (Carnobacterium piscicola).